The primary structure comprises 185 residues: ATP-dependent protease subunit HslV (185 aa).

The active site involves threonine 12. Na(+)-binding residues include alanine 168, cysteine 171, and threonine 174.

This sequence belongs to the peptidase T1B family. HslV subfamily. A double ring-shaped homohexamer of HslV is capped on each side by a ring-shaped HslU homohexamer. The assembly of the HslU/HslV complex is dependent on binding of ATP.

Its subcellular location is the cytoplasm. The enzyme catalyses ATP-dependent cleavage of peptide bonds with broad specificity.. With respect to regulation, allosterically activated by HslU binding. Its function is as follows. Protease subunit of a proteasome-like degradation complex believed to be a general protein degrading machinery. This Ruegeria pomeroyi (strain ATCC 700808 / DSM 15171 / DSS-3) (Silicibacter pomeroyi) protein is ATP-dependent protease subunit HslV.